Reading from the N-terminus, the 147-residue chain is UPF0306 protein YhbP (147 aa).

Belongs to the UPF0306 family.

The sequence is that of UPF0306 protein YhbP from Shigella boydii serotype 4 (strain Sb227).